A 265-amino-acid polypeptide reads, in one-letter code: 6-oxopurine nucleoside phosphorylase (265 aa).

Residues Ser-10, 49 to 50 (RH), and 82 to 83 (SA) contribute to the phosphate site. 2 cysteine pairs are disulfide-bonded: Cys-136-Cys-202 and Cys-162-Cys-190. Met-187 is a binding site for substrate. Residue Thr-188 participates in phosphate binding. 211–213 (NYA) is a substrate binding site. Cys-254 and Cys-256 are joined by a disulfide.

The protein belongs to the PNP/MTAP phosphorylase family. MTAP subfamily. As to quaternary structure, homohexamer. Dimer of a homotrimer.

It catalyses the reaction a purine D-ribonucleoside + phosphate = a purine nucleobase + alpha-D-ribose 1-phosphate. The enzyme catalyses guanosine + phosphate = alpha-D-ribose 1-phosphate + guanine. The catalysed reaction is inosine + phosphate = alpha-D-ribose 1-phosphate + hypoxanthine. It participates in purine metabolism; purine nucleoside salvage. Purine nucleoside phosphorylase which is highly specific for 6-oxopurine nucleosides. Cleaves guanosine or inosine to respective bases and sugar-1-phosphate molecules. Involved in purine salvage. In Pyrococcus furiosus (strain ATCC 43587 / DSM 3638 / JCM 8422 / Vc1), this protein is 6-oxopurine nucleoside phosphorylase.